The primary structure comprises 732 residues: Copper-transporting ATPase (732 aa).

Topologically, residues 1 to 88 (MTKAQFYIEG…NPSFLTPNVK (88 aa)) are cytoplasmic. The HMA domain maps to 2–68 (TKAQFYIEGM…QIEKLGYQPR (67 aa)). Cu(+) contacts are provided by cysteine 13 and cysteine 16. A helical membrane pass occupies residues 89–109 (LALVLLGTLGVLALSMFAPLL). Residues 110–122 (PLPSFLKNPFING) are Extracellular-facing. The helical transmembrane segment at 123–142 (IVQLVLSLMVMHMGRNFYVH) threads the bilayer. At 143–149 (GFKALWA) the chain is on the cytoplasmic side. Residues 150-170 (RQPNMDSLIALGTSAALLYSL) form a helical membrane-spanning segment. The Extracellular portion of the chain corresponds to 171–187 (VLLFRAYTHAPIEGYYF). The helical transmembrane segment at 188 to 208 (ESVCVILLFVMAGKRVEENSK) threads the bilayer. Over 209-336 (DKALEAMQSL…KAPIARLADK (128 aa)) the chain is Cytoplasmic. The helical transmembrane segment at 337-359 (VAGVFVPIVIGIASIAFLVWLVL) threads the bilayer. The Extracellular segment spans residues 360-365 (GDFTRA). A helical membrane pass occupies residues 366–383 (LEVFIAILVISCPCALGL). The Cytoplasmic segment spans residues 384–663 (ATPMALLVAQ…KLSALTIANI (280 aa)). Residue aspartate 421 is the 4-aspartylphosphate intermediate of the active site. The Mg(2+) site is built by aspartate 609 and aspartate 613. A helical membrane pass occupies residues 664 to 683 (KQNLFWAFCYNSIAIPLACG). Residues 684–694 (VAYKLGIMFNP) are Extracellular-facing. Residues 695 to 713 (MLASLAMSLSSVSVVLNAQ) traverse the membrane as a helical segment. Over 714-732 (RLRGAHFKIRGSHENRHSS) the chain is Cytoplasmic.

It belongs to the cation transport ATPase (P-type) (TC 3.A.3) family. Type IB subfamily.

Its subcellular location is the cell membrane. It catalyses the reaction Cu(+)(in) + ATP + H2O = Cu(+)(out) + ADP + phosphate + H(+). Functionally, probably involved in copper export. This is Copper-transporting ATPase (copA) from Helicobacter felis (strain ATCC 49179 / CCUG 28539 / NCTC 12436 / CS1).